The sequence spans 333 residues: CRISPR-associated endonuclease Cas1 (333 aa).

Residues Glu162, His226, and Glu241 each contribute to the Mn(2+) site.

It belongs to the CRISPR-associated endonuclease Cas1 family. Homodimer, forms a heterotetramer with a Cas2 homodimer. Requires Mg(2+) as cofactor. Mn(2+) is required as a cofactor.

CRISPR (clustered regularly interspaced short palindromic repeat), is an adaptive immune system that provides protection against mobile genetic elements (viruses, transposable elements and conjugative plasmids). CRISPR clusters contain spacers, sequences complementary to antecedent mobile elements, and target invading nucleic acids. CRISPR clusters are transcribed and processed into CRISPR RNA (crRNA). Acts as a dsDNA endonuclease. Involved in the integration of spacer DNA into the CRISPR cassette. The sequence is that of CRISPR-associated endonuclease Cas1 from Nanoarchaeum equitans (strain Kin4-M).